We begin with the raw amino-acid sequence, 320 residues long: Delta-aminolevulinic acid dehydratase (320 aa).

Residues Cys119, Cys121, and Cys129 each contribute to the Zn(2+) site. Lys194 (schiff-base intermediate with substrate) is an active-site residue. 5-aminolevulinate is bound by residues Arg204 and Arg216. Glu232 serves as a coordination point for Mg(2+). Lys247 functions as the Schiff-base intermediate with substrate in the catalytic mechanism. Ser273 provides a ligand contact to 5-aminolevulinate.

It belongs to the ALAD family. Homooctamer. Requires Zn(2+) as cofactor.

It carries out the reaction 2 5-aminolevulinate = porphobilinogen + 2 H2O + H(+). It participates in porphyrin-containing compound metabolism; protoporphyrin-IX biosynthesis; coproporphyrinogen-III from 5-aminolevulinate: step 1/4. Functionally, catalyzes an early step in the biosynthesis of tetrapyrroles. Binds two molecules of 5-aminolevulinate per subunit, each at a distinct site, and catalyzes their condensation to form porphobilinogen. This is Delta-aminolevulinic acid dehydratase (hemB) from Methanothermus sociabilis.